The sequence spans 406 residues: Ascaroside receptor GPR2 (406 aa).

Topologically, residues methionine 1–arginine 29 are extracellular. Residues alanine 30–alanine 50 form a helical membrane-spanning segment. Residues cysteine 51–glutamine 61 lie on the Cytoplasmic side of the membrane. Residues leucine 62–glycine 82 form a helical membrane-spanning segment. Over tryptophan 83–glutamine 107 the chain is Extracellular. Cysteine 99 and cysteine 173 are oxidised to a cystine. Residues valine 108 to leucine 128 traverse the membrane as a helical segment. The Cytoplasmic portion of the chain corresponds to glycine 129–tryptophan 143. Residues isoleucine 144–leucine 164 traverse the membrane as a helical segment. The Extracellular portion of the chain corresponds to glycine 165–asparagine 185. A helical transmembrane segment spans residues phenylalanine 186–isoleucine 206. At valine 207 to lysine 326 the chain is on the cytoplasmic side. Residues methionine 327–tyrosine 347 form a helical membrane-spanning segment. Over glutamine 348–proline 356 the chain is Extracellular. Residues leucine 357–valine 377 traverse the membrane as a helical segment. At tyrosine 378 to glycine 406 the chain is on the cytoplasmic side.

Belongs to the G-protein coupled receptor 1 family. As to quaternary structure, interacts with ascaroside receptor GPR3; may form a functional heterodimer. Interacts with guanine nucleotide-binding protein alpha GPA2; to activate adenylate cyclase and positively regulate nematode trap formation.

It localises to the cell membrane. Its function is as follows. G protein-coupled receptor that senses nematode ascaroside pheromones and signals via adenylate cyclase to positively regulate trap formation for nematode capture. This is Ascaroside receptor GPR2 from Arthrobotrys oligospora (strain ATCC 24927 / CBS 115.81 / DSM 1491) (Nematode-trapping fungus).